The sequence spans 110 residues: UPF0122 protein SP70585_1353 (110 aa).

The protein belongs to the UPF0122 family.

In terms of biological role, might take part in the signal recognition particle (SRP) pathway. This is inferred from the conservation of its genetic proximity to ftsY/ffh. May be a regulatory protein. The polypeptide is UPF0122 protein SP70585_1353 (Streptococcus pneumoniae (strain 70585)).